The primary structure comprises 413 residues: uncharacterized protein (413 aa).

A helical transmembrane segment spans residues 14-34 (LLFFTVVIIPIFYYIYKIVYL). Asparagine 46, asparagine 55, asparagine 103, asparagine 171, asparagine 179, asparagine 184, asparagine 220, asparagine 252, asparagine 260, asparagine 273, asparagine 362, asparagine 366, asparagine 374, asparagine 378, asparagine 393, and asparagine 408 each carry an N-linked (GlcNAc...) asparagine; by host glycan. The span at 250–263 (TKNSTETNSDNNSE) shows a compositional bias: low complexity. Positions 250–277 (TKNSTETNSDNNSEIVSETNSETNYSTP) are disordered. Residues 264–277 (IVSETNSETNYSTP) show a composition bias toward polar residues.

It is found in the membrane. This is an uncharacterized protein from Acanthamoeba polyphaga (Amoeba).